Consider the following 349-residue polypeptide: Terpene cyclase janA (349 aa).

The N-linked (GlcNAc...) asparagine glycan is linked to N80. The next 6 membrane-spanning stretches (helical) occupy residues 81 to 101 (LSLY…VIVL), 116 to 136 (LAFL…IPAI), 155 to 175 (IGFY…LAAL), 189 to 209 (LIAV…IIHY), 223 to 243 (IACA…LWFA), and 308 to 328 (VILI…VALL).

This sequence belongs to the membrane-bound ascI terpene cyclase family.

The protein resides in the membrane. It functions in the pathway secondary metabolite biosynthesis. Functionally, part of the gene cluster that mediates the biosynthesis of the indole diterpenes janthitremanes such as shearinine K or shearinine A. The geranylgeranyl diphosphate (GGPP) synthase janG catalyzes the first step in janthitremane biosynthesis via conversion of farnesyl pyrophosphate and isopentyl pyrophosphate into geranylgeranyl pyrophosphate (GGPP). Condensation of indole-3-glycerol phosphate with GGPP by the prenyl transferase janC then forms 3-geranylgeranylindole (3-GGI). Epoxidation by the FAD-dependent monooxygenase janM leads to a epoxidized-GGI that is substrate of the terpene cyclase janB for cyclization to yield paspaline. Paspaline is subsequently converted to 13-desoxypaspaline by the cytochrome P450 monooxygenase janP, via beta-PC-M6 in a series of alpha-face oxidations. The cytochrome P450 monooxygenase janQ is proposed to carry out sequential beta-face oxidation steps at C-7 and C-13 of 13-desoxypaspaline to form paspalicine and paspalinine respectively. The indole diterpene prenyltransferase janD may then convert paspalinine into shearinine K which is substrate of janO and/or additional enzymes for oxidation and cyclization to generate shearinine A. In Penicillium janthinellum (Penicillium vitale), this protein is Terpene cyclase janA.